Here is a 547-residue protein sequence, read N- to C-terminus: Cellodextrinase (547 aa).

Asp148 acts as the Nucleophile in catalysis. Residues His474, Asp520, and Glu529 contribute to the active site.

It belongs to the glycosyl hydrolase 9 (cellulase E) family.

It localises to the secreted. It catalyses the reaction Endohydrolysis of (1-&gt;4)-beta-D-glucosidic linkages in cellulose, lichenin and cereal beta-D-glucans.. With respect to regulation, is not inhibited by methylcellulose. Functionally, glycoside hydrolase that rapidly hydrolyzes short-chain cellodextrins to yield either cellobiose or cellobiose and glucose as end products; cellobiose is not hydrolyzed further. Also shows limited activity against endoglucanase specific substrates (carboxymethylcellulose (CMC), lichenan, laminarin and xylan). This is Cellodextrinase from Butyrivibrio fibrisolvens.